The chain runs to 453 residues: Serine/threonine-protein phosphatase 2A 55 kDa regulatory subunit B delta isoform (453 aa).

WD repeat units lie at residues 32–71, 97–138, 181–219, and 230–270; these read AEADIISTVEFNYSGDLLATGDKGGRVVIFQREQENKGRA, EIEE…KRAE, AHTYHINSISVNSDHETYLSADDLRINLWHLEITDRSFN, and ELTE…LCDR. A Phosphoserine modification is found at S285. 3 WD repeats span residues 289–327, 344–385, and 420–452; these read EIISSISDVKFSHSGRYMMTRDYLSVKVWDLNMEGRPVE, ENDC…DVTL, and DFNKKILHTAWHPMESIIAVAATNNLYIFQDKI. Y305 carries the phosphotyrosine modification. A Phosphothreonine modification is found at T308. Residues 385–406 are disordered; it reads LEASRENSKPRASLKPRKVCSG.

It belongs to the phosphatase 2A regulatory subunit B family. As to quaternary structure, PP2A consists of a common heterodimeric core enzyme, composed of a 36 kDa catalytic subunit (subunit C) and a 65 kDa constant regulatory subunit (PR65 or subunit A), that associates with a variety of regulatory subunits. Proteins that associate with the core dimer include three families of regulatory subunits B (the R2/B/PR55/B55, R3/B''/PR72/PR130/PR59 and R5/B'/B56 families), the 48 kDa variable regulatory subunit, viral proteins, and cell signaling molecules. Interacts with ENSA (when phosphorylated at 'Ser-67') and ARPP19 (when phosphorylated at 'Ser-62'), leading to inhibit PP2A activity. Interacts with IER5. As to expression, widely expressed with high levels in brain, heart, placenta, skeletal muscle, testis, thymus and spleen.

The protein resides in the cytoplasm. Functionally, substrate-recognition subunit of protein phosphatase 2A (PP2A) that plays a key role in cell cycle by controlling mitosis entry and exit. Involved in chromosome clustering during late mitosis by mediating dephosphorylation of MKI67. The activity of PP2A complexes containing PPP2R2D (PR55-delta) fluctuate during the cell cycle: the activity is high in interphase and low in mitosis. This Rattus norvegicus (Rat) protein is Serine/threonine-protein phosphatase 2A 55 kDa regulatory subunit B delta isoform (Ppp2r2d).